Reading from the N-terminus, the 349-residue chain is Protein RecA (349 aa).

G65–T72 serves as a coordination point for ATP. Residues F329 to E349 are disordered. Positions G331–D340 are enriched in acidic residues.

Belongs to the RecA family.

It is found in the cytoplasm. In terms of biological role, can catalyze the hydrolysis of ATP in the presence of single-stranded DNA, the ATP-dependent uptake of single-stranded DNA by duplex DNA, and the ATP-dependent hybridization of homologous single-stranded DNAs. It interacts with LexA causing its activation and leading to its autocatalytic cleavage. This Staphylococcus epidermidis (strain ATCC 35984 / DSM 28319 / BCRC 17069 / CCUG 31568 / BM 3577 / RP62A) protein is Protein RecA.